Reading from the N-terminus, the 122-residue chain is Large ribosomal subunit protein uL14 (122 aa).

This sequence belongs to the universal ribosomal protein uL14 family. As to quaternary structure, part of the 50S ribosomal subunit. Forms a cluster with proteins L3 and L19. In the 70S ribosome, L14 and L19 interact and together make contacts with the 16S rRNA in bridges B5 and B8.

In terms of biological role, binds to 23S rRNA. Forms part of two intersubunit bridges in the 70S ribosome. This Caulobacter vibrioides (strain ATCC 19089 / CIP 103742 / CB 15) (Caulobacter crescentus) protein is Large ribosomal subunit protein uL14.